The chain runs to 1684 residues: Latrophilin Cirl (1684 aa).

Topologically, residues methionine 1–arginine 765 are extracellular. Positions alanine 21–valine 110 constitute an SUEL-type lectin domain. N-linked (GlcNAc...) asparagine glycans are attached at residues asparagine 138, asparagine 251, asparagine 297, and asparagine 336. A disordered region spans residues proline 181–alanine 300. 2 stretches are compositionally biased toward polar residues: residues serine 250–isoleucine 260 and lysine 278–alanine 300. The interval serine 370 to serine 391 is disordered. A compositionally biased stretch (low complexity) spans threonine 381–serine 391. 4 N-linked (GlcNAc...) asparagine glycosylation sites follow: asparagine 396, asparagine 653, asparagine 701, and asparagine 728. The 194-residue stretch at arginine 559–histidine 752 folds into the GAIN-B domain. Cystine bridges form between cysteine 707/cysteine 734 and cysteine 722/cysteine 736. Positions cysteine 707 to histidine 752 are GPS. The chain crosses the membrane as a helical span at residues isoleucine 766 to leucine 786. Over lysine 787 to threonine 799 the chain is Cytoplasmic. The chain crosses the membrane as a helical span at residues serine 800 to isoleucine 820. Topologically, residues glutamate 821–serine 826 are extracellular. Residues isoleucine 827 to phenylalanine 847 form a helical membrane-spanning segment. At cysteine 848 to valine 873 the chain is on the cytoplasmic side. A helical membrane pass occupies residues asparagine 874 to isoleucine 894. At asparagine 895–phenylalanine 918 the chain is on the extracellular side. Residues valine 919–isoleucine 939 traverse the membrane as a helical segment. The Cytoplasmic segment spans residues methionine 940–serine 966. The helical transmembrane segment at phenylalanine 967 to alanine 987 threads the bilayer. Residues lysine 988–threonine 994 lie on the Extracellular side of the membrane. Residues glycine 995–phenylalanine 1015 traverse the membrane as a helical segment. The Cytoplasmic segment spans residues histidine 1016–lysine 1684. The tract at residues proline 1080 to threonine 1100 is disordered. Serine 1156, serine 1247, and serine 1254 each carry phosphoserine. 4 disordered regions span residues lysine 1228–arginine 1255, lysine 1270–proline 1353, serine 1441–glutamine 1520, and serine 1587–leucine 1669. Residues glutamine 1298–leucine 1314 show a composition bias toward low complexity. Serine 1315 and serine 1316 each carry phosphoserine. Positions leucine 1328–leucine 1348 are enriched in low complexity. A compositionally biased stretch (polar residues) spans arginine 1455–glutamine 1466. Composition is skewed to acidic residues over residues aspartate 1476 to threonine 1489 and cysteine 1499 to aspartate 1512. A compositionally biased stretch (low complexity) spans glutamine 1631 to histidine 1654.

It belongs to the G-protein coupled receptor 2 family. LN-TM7 subfamily. As to quaternary structure, forms a heterodimer, consisting of a large extracellular region non-covalently linked to a seven-transmembrane moiety. Proteolytically cleaved into 2 subunits, an extracellular subunit and a seven-transmembrane subunit.

Its subcellular location is the cell membrane. This chain is Latrophilin Cirl, found in Drosophila persimilis (Fruit fly).